A 561-amino-acid polypeptide reads, in one-letter code: PR domain zinc finger protein 14 (561 aa).

The interval 1–20 (MALPPSGETQSQDKANYLPQ) is disordered. A compositionally biased stretch (polar residues) spans 7–20 (GETQSQDKANYLPQ). The tract at residues 184-373 (GFNFTEEELS…GVPMNLRVTE (190 aa)) is interaction with CBFA2T2. The 116-residue stretch at 241-356 (EGLCLMQTSF…RNQELLVWYG (116 aa)) folds into the SET domain. Tyr-355 is an S-adenosyl-L-methionine binding site. The segment at 390–416 (YRCERCGKVFTYKYYRDKHLKYTPCVD) adopts a C2H2-type 1; atypical zinc-finger fold. 5 consecutive C2H2-type zinc fingers follow at residues 422-445 (FPCS…LHVH), 451-473 (YLCS…MRVH), 479-501 (YQCV…IRQH), 507-530 (FKCK…RRSH), and 536-558 (SSCD…MRLH).

Belongs to the class V-like SAM-binding methyltransferase superfamily. As to quaternary structure, interacts with CBFA2T2. In terms of tissue distribution, restricted to embryonic stem cells and primordial germ cells. Not detected in epiblast-derived stem cells.

The protein localises to the nucleus. Transcription factor that has both positive and negative roles on transcription. Plays a role in cellular pluripotency. Essential for germ cell development at 2 levels: the reacquisition of potential pluripotency, including SOX2 up-regulation, and successful epigenetic reprogramming, characterized by EHMT1 repression. Its association with CBFA2T2 is required for the functions in pluripotency and germ cell formation. This is PR domain zinc finger protein 14 (Prdm14) from Mus musculus (Mouse).